Here is a 151-residue protein sequence, read N- to C-terminus: MSTSARRRLMRDFKRMQTDPPAGVSASPVADNVMTWNAVIIGPADTPFEDGTFRLVMHFEEQYPNKPPGVKFISQMFHPNVYGTGELCLDILQNRWSPTYDVAAILTSIQSLLNDPNTSSPANVEASNLYKDNRKEYIKRVRETVEKSWED.

Residues 1 to 26 are disordered; sequence MSTSARRRLMRDFKRMQTDPPAGVSA. One can recognise a UBC core domain in the interval 4-150; the sequence is SARRRLMRDF…VRETVEKSWE (147 aa). The Glycyl thioester intermediate role is filled by cysteine 88.

Belongs to the ubiquitin-conjugating enzyme family.

The protein localises to the cytoplasm. Its subcellular location is the nucleus. The enzyme catalyses S-ubiquitinyl-[E1 ubiquitin-activating enzyme]-L-cysteine + [E2 ubiquitin-conjugating enzyme]-L-cysteine = [E1 ubiquitin-activating enzyme]-L-cysteine + S-ubiquitinyl-[E2 ubiquitin-conjugating enzyme]-L-cysteine.. The protein operates within protein modification; protein ubiquitination. Its function is as follows. Catalyzes the covalent attachment of ubiquitin to other proteins. Plays a role in transcription regulation by catalyzing the monoubiquitination of histone H2B to form H2BK123ub1. H2BK123ub1 gives a specific tag for epigenetic transcriptional activation and is also a prerequisite for H3K4me and H3K79me formation. Also involved in postreplication repair of UV-damaged DNA, in N-end rule-dependent protein degradation and in sporulation. The sequence is that of Ubiquitin-conjugating enzyme E2 2 (ubc2) from Aspergillus fumigatus (strain ATCC MYA-4609 / CBS 101355 / FGSC A1100 / Af293) (Neosartorya fumigata).